A 499-amino-acid polypeptide reads, in one-letter code: Probable cytosol aminopeptidase (499 aa).

Mn(2+) is bound by residues lysine 267 and aspartate 272. The active site involves lysine 279. The Mn(2+) site is built by aspartate 290, aspartate 349, and glutamate 351. Arginine 353 is an active-site residue.

This sequence belongs to the peptidase M17 family. Mn(2+) is required as a cofactor.

It localises to the cytoplasm. It carries out the reaction Release of an N-terminal amino acid, Xaa-|-Yaa-, in which Xaa is preferably Leu, but may be other amino acids including Pro although not Arg or Lys, and Yaa may be Pro. Amino acid amides and methyl esters are also readily hydrolyzed, but rates on arylamides are exceedingly low.. The enzyme catalyses Release of an N-terminal amino acid, preferentially leucine, but not glutamic or aspartic acids.. Presumably involved in the processing and regular turnover of intracellular proteins. Catalyzes the removal of unsubstituted N-terminal amino acids from various peptides. In Alkaliphilus oremlandii (strain OhILAs) (Clostridium oremlandii (strain OhILAs)), this protein is Probable cytosol aminopeptidase.